The primary structure comprises 91 residues: Bacterial microcompartment shell protein PduJ (91 aa).

The 85-residue stretch at 4 to 88 (ALGLVETKGL…PHSDVEAILP (85 aa)) folds into the BMC domain.

Belongs to the bacterial microcompartments protein family. In terms of assembly, homohexamer with a central pore of about 5.7 Angstroms in diameter. Interacts with PduP, which targets PduP to the BMC.

It is found in the bacterial microcompartment. Its pathway is polyol metabolism; 1,2-propanediol degradation. One of the major shell proteins of the bacterial microcompartment (BMC) dedicated to 1,2-propanediol (1,2-PD) degradation. The isolated BMC shell component protein ratio for J:A:B':B:K:T:U is approximately 15:10:7:6:1:1:2. At least one of PduA or PduJ is required for BMC assembly; it must be encoded as the first gene in the pdu operon. Required for structural integrity of BMCs and to mitigate propionaldehyde toxicity, probably joins facets responsible for BMC closure. Edge residues (particularly Lys-25) are important for function and assembly of the BMC. 80% identical to PduA; although their pore regions appear structurally identical, unlike PduA plays no role in 1,2-PD diffusion into or out of the BMC shell. If pduJ is cloned in the chromosomal position of pduA it is able to complement a pduA deletion; it then has a functional pore as it assumes the transport functions of PduA. Overexpression of this protein leads to aberrant filaments that extend the length of the cell, cross the cleavage furrow and impair division. The filaments form nanotubes with a hollow center. Modeling suggests PduJ is probably the hub for binding multiple enzymes to the interior of the BMC; modeling suggests PduC, PduD, PduG and PduM are targeted to PduJ. Its function is as follows. The 1,2-propanediol (1,2-PD) degradation bacterial microcompartment (BMC) concentrates low levels of 1,2-PD catabolic enzymes, concentrates volatile reaction intermediates thus enhancing pathway flux and keeps the level of toxic, mutagenic propionaldehyde low. In Salmonella typhimurium (strain LT2 / SGSC1412 / ATCC 700720), this protein is Bacterial microcompartment shell protein PduJ.